A 202-amino-acid chain; its full sequence is Ribosome maturation factor RimM (202 aa).

One can recognise a PRC barrel domain in the interval 121–202 (ADEYYWVDLI…CITVDWQPDY (82 aa)).

Belongs to the RimM family. Binds ribosomal protein uS19.

The protein localises to the cytoplasm. Its function is as follows. An accessory protein needed during the final step in the assembly of 30S ribosomal subunit, possibly for assembly of the head region. Essential for efficient processing of 16S rRNA. May be needed both before and after RbfA during the maturation of 16S rRNA. It has affinity for free ribosomal 30S subunits but not for 70S ribosomes. This chain is Ribosome maturation factor RimM, found in Polaromonas naphthalenivorans (strain CJ2).